We begin with the raw amino-acid sequence, 709 residues long: D-(-)-3-hydroxybutyrate oligomer hydrolase (709 aa).

An N-terminal signal peptide occupies residues 1–26 (MTVFKTAPLLIAALAASSCGGGGSGA). The interval 58–77 (GLGRSGLQDDSPPGYAGSQP) is disordered. Serine 305 (charge relay system) is an active-site residue.

This sequence belongs to the D-(-)-3-hydroxybutyrate oligomer hydrolase family.

It localises to the secreted. It carries out the reaction (3R)-hydroxybutanoate dimer + H2O = 2 (R)-3-hydroxybutanoate + H(+). Its pathway is lipid metabolism; butanoate metabolism. Participates in the degradation of poly-3-hydroxybutyrate (PHB). It works downstream of poly(3-hydroxybutyrate) depolymerase, hydrolyzing D(-)-3-hydroxybutyrate oligomers of various length (3HB-oligomers) into 3HB-monomers. In Paracidovorax citrulli (strain AAC00-1) (Acidovorax citrulli), this protein is D-(-)-3-hydroxybutyrate oligomer hydrolase.